A 337-amino-acid polypeptide reads, in one-letter code: Glyceraldehyde-3-phosphate dehydrogenase (337 aa).

NAD(+)-binding positions include 12-13 (RI), Asp-34, and Lys-79. D-glyceraldehyde 3-phosphate contacts are provided by residues 150-152 (SCT), Thr-181, 210-211 (TG), and Arg-233. Cys-151 serves as the catalytic Nucleophile. Position 315 (Asn-315) interacts with NAD(+).

This sequence belongs to the glyceraldehyde-3-phosphate dehydrogenase family. In terms of assembly, homotetramer.

It localises to the cytoplasm. The enzyme catalyses D-glyceraldehyde 3-phosphate + phosphate + NAD(+) = (2R)-3-phospho-glyceroyl phosphate + NADH + H(+). It functions in the pathway carbohydrate degradation; glycolysis; pyruvate from D-glyceraldehyde 3-phosphate: step 1/5. The sequence is that of Glyceraldehyde-3-phosphate dehydrogenase (GPD1) from Cochliobolus heterostrophus (Southern corn leaf blight fungus).